Consider the following 204-residue polypeptide: Putative peptidase PfaP (204 aa).

A signal peptide spans 1-27; the sequence is MRLRKTRKIVVSMKDMAASGGYYIASS. The active-site Nucleophile is serine 19. The active-site Proton donor/acceptor is lysine 70.

This sequence belongs to the peptidase S49 family.

Its function is as follows. Possible protease. May be involved in export of periplasmic flagella proteins. The sequence is that of Putative peptidase PfaP (pfaP) from Leptospira borgpetersenii.